We begin with the raw amino-acid sequence, 328 residues long: 5,10-methylenetetrahydromethanopterin reductase (328 aa).

The protein belongs to the mer family.

Its subcellular location is the cytoplasm. It carries out the reaction 5-methyl-5,6,7,8-tetrahydromethanopterin + oxidized coenzyme F420-(gamma-L-Glu)(n) + H(+) = 5,10-methylenetetrahydromethanopterin + reduced coenzyme F420-(gamma-L-Glu)(n). Its pathway is one-carbon metabolism; methanogenesis from CO(2); methyl-coenzyme M from 5,10-methylene-5,6,7,8-tetrahydromethanopterin: step 1/2. Catalyzes the reversible reduction of methylene-H(4)MPT to methyl-H(4)MPT. The polypeptide is 5,10-methylenetetrahydromethanopterin reductase (Methanosarcina acetivorans (strain ATCC 35395 / DSM 2834 / JCM 12185 / C2A)).